A 648-amino-acid polypeptide reads, in one-letter code: MGKEPLTLKSIQVAVEELYPNKARALTLAQHSRAPSPRLRSRLFSKALKGDHRCGETETPKSCSEVAGCKAAMRHQGKIPEELSLDDRARTQKKWGRGKWEPEPSSKPPREATLEERHARGEKHLGVEIEKTSGEIIRCEKCKRERELQQSLERERLSLGTSELDMGKGPMYDVEKLVRTRSCRRSPEANPASGEEGWKGDSHRSSPRNPTQELRRPSKSMDKKEDRGPEDQESHAQGAAKAKKDLVEVLPVTEEGLREVKKDTRPMSRSKHGGWLLREHQAGFEKLRRTRGEEKEAEKEKKPCMSGGRRMTLRDDQPAKLEKEPKTRPEENKPERPSGRKPRPMGIIAANVEKHYETGRVIGDGNFAVVKECRHRETRQAYAMKIIDKSRLKGKEDMVDSEILIIQSLSHPNIVKLHEVYETDMEIYLILEYVQGGDLFDAIIESVKFPEPDAALMIMDLCKALVHMHDKSIVHRDLKPENLLVQRNEDKSTTLKLADFGLAKHVVRPIFTVCGTPTYVAPEILSEKGYGLEVDMWAAGVILYILLCGFPPFRSPERDQDELFNIIQLGHFEFLPPYWDNISDAAKDLVSRLLVVDPKKRYTAHQVLQHPWIETAGKTNTVKRQKQVSPSSEGHFRSQHKRVVEQVS.

Disordered regions lie at residues 86 to 127 and 150 to 345; these read DDRA…HLGV and QSLE…PRPM. 5 stretches are compositionally biased toward basic and acidic residues: residues 98–127, 213–234, 255–266, 277–303, and 312–338; these read GKWEPEPSSKPPREATLEERHARGEKHLGV, ELRRPSKSMDKKEDRGPEDQES, EGLREVKKDTRP, LREHQAGFEKLRRTRGEEKEAEKEKKP, and TLRDDQPAKLEKEPKTRPEENKPERPS. In terms of domain architecture, Protein kinase spans 356-613; it reads YETGRVIGDG…AHQVLQHPWI (258 aa). Residues 362 to 370 and Lys-385 each bind ATP; that span reads IGDGNFAVV. Asp-477 (proton acceptor) is an active-site residue. Residues 628–648 form a disordered region; it reads VSPSSEGHFRSQHKRVVEQVS.

Belongs to the protein kinase superfamily. CAMK Ser/Thr protein kinase family. CaMK subfamily.

The protein localises to the cytoplasm. It localises to the nucleus. The catalysed reaction is L-seryl-[protein] + ATP = O-phospho-L-seryl-[protein] + ADP + H(+). It catalyses the reaction L-threonyl-[protein] + ATP = O-phospho-L-threonyl-[protein] + ADP + H(+). The chain is Serine/threonine-protein kinase DCLK3 (DCLK3) from Homo sapiens (Human).